The chain runs to 220 residues: Probable cutinase 5 (220 aa).

The signal sequence occupies residues 1–18; sequence MVALHTLLLTAFAAVSLA. 2 disulfides stabilise this stretch: Cys-42–Cys-121 and Cys-68–Cys-82. The active-site Nucleophile is the Ser-132. Residues Cys-183 and Cys-190 are joined by a disulfide bond. Residue Asp-187 is part of the active site. His-200 acts as the Proton donor/acceptor in catalysis.

This sequence belongs to the cutinase family.

It localises to the secreted. The catalysed reaction is cutin + H2O = cutin monomers.. Its function is as follows. Catalyzes the hydrolysis of complex carboxylic polyesters found in the cell wall of plants. Degrades cutin, a macromolecule that forms the structure of the plant cuticle. The protein is Probable cutinase 5 of Aspergillus terreus (strain NIH 2624 / FGSC A1156).